Reading from the N-terminus, the 354-residue chain is N-acetyl-gamma-glutamyl-phosphate reductase (354 aa).

Residue Cys156 is part of the active site.

This sequence belongs to the NAGSA dehydrogenase family. Type 1 subfamily.

The protein resides in the cytoplasm. The enzyme catalyses N-acetyl-L-glutamate 5-semialdehyde + phosphate + NADP(+) = N-acetyl-L-glutamyl 5-phosphate + NADPH + H(+). It participates in amino-acid biosynthesis; L-arginine biosynthesis; N(2)-acetyl-L-ornithine from L-glutamate: step 3/4. Its function is as follows. Catalyzes the NADPH-dependent reduction of N-acetyl-5-glutamyl phosphate to yield N-acetyl-L-glutamate 5-semialdehyde. This is N-acetyl-gamma-glutamyl-phosphate reductase from Bordetella pertussis (strain Tohama I / ATCC BAA-589 / NCTC 13251).